Consider the following 126-residue polypeptide: B3 domain-containing protein At5g54067 (126 aa).

The segment at residues 20–118 is a DNA-binding region (TF-B3); the sequence is SDIVGNVVLP…KFVVLNFQYS (99 aa).

It localises to the nucleus. This is B3 domain-containing protein At5g54067 from Arabidopsis thaliana (Mouse-ear cress).